Reading from the N-terminus, the 214-residue chain is Imidazole glycerol phosphate synthase subunit HisH 2 (214 aa).

A Glutamine amidotransferase type-1 domain is found at 2 to 210; sequence KIVIIDYDMG…LDWVKIQKLG (209 aa). Catalysis depends on Cys82, which acts as the Nucleophile. Active-site residues include His185 and Glu187.

Heterodimer of HisH and HisF.

Its subcellular location is the cytoplasm. The catalysed reaction is 5-[(5-phospho-1-deoxy-D-ribulos-1-ylimino)methylamino]-1-(5-phospho-beta-D-ribosyl)imidazole-4-carboxamide + L-glutamine = D-erythro-1-(imidazol-4-yl)glycerol 3-phosphate + 5-amino-1-(5-phospho-beta-D-ribosyl)imidazole-4-carboxamide + L-glutamate + H(+). The enzyme catalyses L-glutamine + H2O = L-glutamate + NH4(+). It functions in the pathway amino-acid biosynthesis; L-histidine biosynthesis; L-histidine from 5-phospho-alpha-D-ribose 1-diphosphate: step 5/9. Its function is as follows. IGPS catalyzes the conversion of PRFAR and glutamine to IGP, AICAR and glutamate. The HisH subunit provides the glutamine amidotransferase activity that produces the ammonia necessary to HisF for the synthesis of IGP and AICAR. The chain is Imidazole glycerol phosphate synthase subunit HisH 2 (hisH2) from Vibrio vulnificus (strain YJ016).